The primary structure comprises 259 residues: Hydroxyethylthiazole kinase (259 aa).

Position 37 (Met-37) interacts with substrate. ATP-binding residues include Arg-113 and Thr-158. Gly-185 contributes to the substrate binding site.

The protein belongs to the Thz kinase family. Mg(2+) is required as a cofactor.

The enzyme catalyses 5-(2-hydroxyethyl)-4-methylthiazole + ATP = 4-methyl-5-(2-phosphooxyethyl)-thiazole + ADP + H(+). Its pathway is cofactor biosynthesis; thiamine diphosphate biosynthesis; 4-methyl-5-(2-phosphoethyl)-thiazole from 5-(2-hydroxyethyl)-4-methylthiazole: step 1/1. Its function is as follows. Catalyzes the phosphorylation of the hydroxyl group of 4-methyl-5-beta-hydroxyethylthiazole (THZ). The protein is Hydroxyethylthiazole kinase of Helicobacter pylori (strain ATCC 700392 / 26695) (Campylobacter pylori).